We begin with the raw amino-acid sequence, 260 residues long: Deoxycytidine kinase (260 aa).

Phosphoserine; by CK1 occurs at positions 11 and 15. Glycine 28–threonine 36 serves as a coordination point for ATP. Glutamate 53 is a binding site for substrate. At threonine 72 the chain carries Phosphothreonine; by CK1. Residue serine 74 is modified to Phosphoserine. Substrate contacts are provided by tyrosine 86 and glutamine 97. The active-site Proton acceptor is glutamate 127. Residues arginine 128 and aspartate 133 each coordinate substrate. An ATP-binding site is contributed by arginine 188–arginine 192. Glutamate 197 lines the substrate pocket. Glutamate 240–phenylalanine 242 lines the ATP pocket.

This sequence belongs to the DCK/DGK family. In terms of assembly, homodimer. Post-translationally, phosphorylated and activated in vitro upon phosphorylation at Ser-74 by CSNK1D/CK1.

The protein resides in the nucleus. The enzyme catalyses 2'-deoxycytidine + a ribonucleoside 5'-triphosphate = dCMP + a ribonucleoside 5'-diphosphate + H(+). It carries out the reaction 2'-deoxyadenosine + ATP = dAMP + ADP + H(+). The catalysed reaction is 2'-deoxyguanosine + ATP = dGMP + ADP + H(+). Phosphorylates the deoxyribonucleosides deoxycytidine, deoxyguanosine and deoxyadenosine. Has broad substrate specificity, and does not display selectivity based on the chirality of the substrate. It is also an essential enzyme for the phosphorylation of numerous nucleoside analogs widely employed as antiviral and chemotherapeutic agents. In Homo sapiens (Human), this protein is Deoxycytidine kinase (DCK).